We begin with the raw amino-acid sequence, 158 residues long: Large ribosomal subunit protein mL50 (158 aa).

The protein belongs to the mitochondrion-specific ribosomal protein mL50 family. Component of the mitochondrial large ribosomal subunit (mt-LSU). Mature mammalian 55S mitochondrial ribosomes consist of a small (28S) and a large (39S) subunit. The 28S small subunit contains a 12S ribosomal RNA (12S mt-rRNA) and 30 different proteins. The 39S large subunit contains a 16S rRNA (16S mt-rRNA), a copy of mitochondrial valine transfer RNA (mt-tRNA(Val)), which plays an integral structural role, and 52 different proteins.

Its subcellular location is the mitochondrion. The chain is Large ribosomal subunit protein mL50 (MRPL50) from Homo sapiens (Human).